The following is a 473-amino-acid chain: Calcium uptake protein 1, mitochondrial (473 aa).

The transit peptide at M1–L33 directs the protein to the mitochondrion. Residues S61 to V101 form a disordered region. The segment covering S66–A79 has biased composition (basic and acidic residues). The span at D80 to P91 shows a compositional bias: acidic residues. A polybasic region region spans residues K96 to K107. A k/R-ring region spans residues K123–R126. Residues T215–Q250 form the EF-hand 1 domain. Residues D228, N230, D232, E234, and E239 each contribute to the Ca(2+) site. A k/R-ring region spans residues R256–R260. Positions L405–R440 constitute an EF-hand 2 domain. Ca(2+) contacts are provided by D418, D420, N422, E424, and E429. The C-helix region stretch occupies residues R452–Q462.

It belongs to the MICU1 family. MICU1 subfamily. As to quaternary structure, heterodimer; disulfide-linked; heterodimerizes with micu2. Component of the uniplex complex.

It localises to the mitochondrion intermembrane space. Its subcellular location is the mitochondrion inner membrane. Functionally, calcium sensor of the mitochondrial calcium uniporter (mcu) channel, which senses calcium level via its EF-hand domains. micu1 and micu2 form a disulfide-linked heterodimer that stimulates and inhibits MCU activity, depending on the concentration of calcium. At low calcium levels, micu1 occludes the pore of the MCU channel, preventing mitochondrial calcium uptake. At higher calcium levels, calcium-binding to micu1 and micu2 induces a conformational change that weakens mcu-micu1 interactions and moves the micu1-micu2 heterodimer away from the pore, allowing calcium permeation through the mcu channel. Also required to protect against manganese toxicity by preventing manganese uptake by mcu. This Xenopus tropicalis (Western clawed frog) protein is Calcium uptake protein 1, mitochondrial (micu1).